The chain runs to 22 residues: Peptide PGLa-BM3 (22 aa).

Leucine 22 is modified (leucine amide).

As to expression, expressed by the skin glands.

The protein localises to the secreted. Functionally, antimicrobial peptide. This chain is Peptide PGLa-BM3, found in Xenopus boumbaensis (Mawa clawed frog).